The following is an 859-amino-acid chain: MKLKDTKSRPKQSSCGKFQTKGIKVVGKWKEVKIDPNMFADGQMDDLVCFEELTDYQLVSPAKNPSSLFSKEAPKRKAQAVSEEEEEEEGKSSSPKKKIKLKKSKNVATEGTSTQKEFEVKDPELEAQGDDMVCDDPEAGEMTSENLVQTAPKKKKNKGKKGLEPSQSTAAKVPKKAKTWIPEVHDQKADVSAWKDLFVPRPVLRALSFLGFSAPTPIQALTLAPAIRDKLDILGAAETGSGKTLAFAIPMIHAVLQWQKRNAAPPPSNTEAPPGETRTEAGAETRSPGKAEAESDALPDDTVIESEALPSDIAAEARAKTGGTVSDQALLFGDDDAGEGPSSLIREKPVPKQNENEEENLDKEQTGNLKQELDDKSATCKAYPKRPLLGLVLTPTRELAVQVKQHIDAVARFTGIKTAILVGGMSTQKQQRMLNRRPEIVVATPGRLWELIKEKHYHLRNLRQLRCLVVDEADRMVEKGHFAELSQLLEMLNDSQYNPKRQTLVFSATLTLVHQAPARILHKKHTKKMDKTAKLDLLMQKIGMRGKPKVIDLTRNEATVETLTETKIHCETDEKDFYLYYFLMQYPGRSLVFANSISCIKRLSGLLKVLDIMPLTLHACMHQKQRLRNLEQFARLEDCVLLATDVAARGLDIPKVQHVIHYQVPRTSEIYVHRSGRTARATNEGLSLMLIGPEDVINFKKIYKTLKKDEDIPLFPVQTKYMDVVKERIRLARQIEKSEYRNFQACLHNSWIEQAAAALEIELEEDMYKGGKADQQEERRRQKQMKVLKKELRHLLSQPLFTESQKTKYPTQSGKPPLLVSAPSKSESALSCLSKQKKKKTKKPKEPQPEQPQPSTSAN.

Lysine 17 carries the N6-acetyllysine modification. Phosphoserine is present on serine 60. A disordered region spans residues 61-170 (PAKNPSSLFS…KGLEPSQSTA (110 aa)). Lysine 71 is modified (N6-acetyllysine). Phosphoserine is present on residues serine 82 and serine 94. Residues 94–105 (SPKKKIKLKKSK) are compositionally biased toward basic residues. Over residues 106–115 (NVATEGTSTQ) the composition is skewed to polar residues. Positions 125–139 (LEAQGDDMVCDDPEA) are enriched in acidic residues. Positions 192–220 (SAWKDLFVPRPVLRALSFLGFSAPTPIQA) match the Q motif motif. Residues 224-528 (APAIRDKLDI…RILHKKHTKK (305 aa)) form the Helicase ATP-binding domain. ATP is bound at residue 237 to 244 (AETGSGKT). Residues 262–300 (NAAPPPSNTEAPPGETRTEAGAETRSPGKAEAESDALPD) are disordered. Over residues 277–293 (TRTEAGAETRSPGKAEA) the composition is skewed to basic and acidic residues. 2 positions are modified to phosphoserine: serine 287 and serine 295. Threonine 302 bears the Phosphothreonine mark. Residues 326 to 376 (SDQALLFGDDDAGEGPSSLIREKPVPKQNENEEENLDKEQTGNLKQELDDK) are disordered. Lysine 370 participates in a covalent cross-link: Glycyl lysine isopeptide (Lys-Gly) (interchain with G-Cter in SUMO2). A DEAD box motif is present at residues 471–474 (DEAD). In terms of domain architecture, Helicase C-terminal spans 578-723 (YLYYFLMQYP…LFPVQTKYMD (146 aa)). Residues lysine 624, lysine 808, and lysine 825 each participate in a glycyl lysine isopeptide (Lys-Gly) (interchain with G-Cter in SUMO2) cross-link. Polar residues-rich tracts occupy residues 799-814 (PLFT…TQSG) and 823-833 (PSKSESALSCL). The interval 799–859 (PLFTESQKTK…EQPQPSTSAN (61 aa)) is disordered.

This sequence belongs to the DEAD box helicase family. DDX24/MAK5 subfamily. Interacts with FADD. Interacts with RIPK1; this interaction disrupts RLR signaling activation of IFN-dependent transcription factor IRF7. Interacts with NIP7. Interacts with EP300; this interaction prevents TP53 acetylation mediated by EP300. As to quaternary structure, (Microbial infection) Interacts with HIV-1 virus Gag and Rev proteins. Ubiquitinated by MDM2 without targeting DDX24 for proteasomal degradation. Instead, polyubiquitinated DDX24 promotes interaction with NIP7, a component of pre-rRNP processing complex, and associates with pre-rRNA molecules and pre-ribosomal particles. As to expression, ubiquitous. Most abundant in heart and brain, but with lowest levels in thymus and small intestine.

It is found in the cytoplasm. Its subcellular location is the nucleus. It carries out the reaction ATP + H2O = ADP + phosphate + H(+). ATP-dependent RNA helicase that plays a role in various aspects of RNA metabolism including pre-mRNA splicing and is thereby involved in different biological processes such as cell cycle regulation or innate immunity. Plays an inhibitory role in TP53 transcriptional activity and subsequently in TP53 controlled cell growth arrest and senescence by inhibiting its EP300 mediated acetylation. Negatively regulates cytosolic RNA-mediated innate immune signaling at least in part by affecting RIPK1/IRF7 interactions. Alternatively, possesses antiviral activity by recognizing gammaherpesvirus transcripts in the context of lytic reactivation. Plays an essential role in cell cycle regulation in vascular smooth muscle cells by interacting with and regulating FANCA (Fanconi anemia complementation group A) mRNA. In terms of biological role, (Microbial infection) Plays a positive role in HIV-1 infection by promoting Rev-dependent nuclear export of viral RNAs and their packaging into virus particles. The polypeptide is ATP-dependent RNA helicase DDX24 (DDX24) (Homo sapiens (Human)).